A 90-amino-acid chain; its full sequence is Cell division topological specificity factor (90 aa).

Belongs to the MinE family.

In terms of biological role, prevents the cell division inhibition by proteins MinC and MinD at internal division sites while permitting inhibition at polar sites. This ensures cell division at the proper site by restricting the formation of a division septum at the midpoint of the long axis of the cell. In Clostridium perfringens (strain SM101 / Type A), this protein is Cell division topological specificity factor.